We begin with the raw amino-acid sequence, 368 residues long: 2-aminoethylphosphonate--pyruvate transaminase (368 aa).

The residue at position 192 (K192) is an N6-(pyridoxal phosphate)lysine.

The protein belongs to the class-V pyridoxal-phosphate-dependent aminotransferase family. PhnW subfamily. As to quaternary structure, homodimer. The cofactor is pyridoxal 5'-phosphate.

It carries out the reaction (2-aminoethyl)phosphonate + pyruvate = phosphonoacetaldehyde + L-alanine. Its function is as follows. Involved in phosphonate degradation. In Pseudomonas putida (strain GB-1), this protein is 2-aminoethylphosphonate--pyruvate transaminase.